We begin with the raw amino-acid sequence, 430 residues long: Glutamate-1-semialdehyde 2,1-aminomutase (430 aa).

The residue at position 267 (K267) is an N6-(pyridoxal phosphate)lysine.

This sequence belongs to the class-III pyridoxal-phosphate-dependent aminotransferase family. HemL subfamily. Homodimer. It depends on pyridoxal 5'-phosphate as a cofactor.

Its subcellular location is the cytoplasm. The enzyme catalyses (S)-4-amino-5-oxopentanoate = 5-aminolevulinate. The protein operates within porphyrin-containing compound metabolism; protoporphyrin-IX biosynthesis; 5-aminolevulinate from L-glutamyl-tRNA(Glu): step 2/2. The protein is Glutamate-1-semialdehyde 2,1-aminomutase of Natranaerobius thermophilus (strain ATCC BAA-1301 / DSM 18059 / JW/NM-WN-LF).